Consider the following 237-residue polypeptide: Phosphoribosylaminoimidazole-succinocarboxamide synthase (237 aa).

It belongs to the SAICAR synthetase family.

The enzyme catalyses 5-amino-1-(5-phospho-D-ribosyl)imidazole-4-carboxylate + L-aspartate + ATP = (2S)-2-[5-amino-1-(5-phospho-beta-D-ribosyl)imidazole-4-carboxamido]succinate + ADP + phosphate + 2 H(+). It functions in the pathway purine metabolism; IMP biosynthesis via de novo pathway; 5-amino-1-(5-phospho-D-ribosyl)imidazole-4-carboxamide from 5-amino-1-(5-phospho-D-ribosyl)imidazole-4-carboxylate: step 1/2. In Escherichia coli O127:H6 (strain E2348/69 / EPEC), this protein is Phosphoribosylaminoimidazole-succinocarboxamide synthase.